The primary structure comprises 310 residues: Homoserine kinase (310 aa).

Residue 91 to 101 (PIGSGLGSSAC) coordinates ATP.

The protein belongs to the GHMP kinase family. Homoserine kinase subfamily.

The protein localises to the cytoplasm. The enzyme catalyses L-homoserine + ATP = O-phospho-L-homoserine + ADP + H(+). It participates in amino-acid biosynthesis; L-threonine biosynthesis; L-threonine from L-aspartate: step 4/5. In terms of biological role, catalyzes the ATP-dependent phosphorylation of L-homoserine to L-homoserine phosphate. This is Homoserine kinase from Escherichia coli (strain K12 / MC4100 / BW2952).